The following is a 395-amino-acid chain: Acetate kinase (395 aa).

Residue N7 participates in Mg(2+) binding. K14 lines the ATP pocket. A substrate-binding site is contributed by R90. The Proton donor/acceptor role is filled by D147. ATP contacts are provided by residues H207–G211, D282–R284, and G330–N334. Position 383 (E383) interacts with Mg(2+).

Belongs to the acetokinase family. As to quaternary structure, homodimer. Mg(2+) serves as cofactor. The cofactor is Mn(2+).

The protein resides in the cytoplasm. It carries out the reaction acetate + ATP = acetyl phosphate + ADP. It functions in the pathway metabolic intermediate biosynthesis; acetyl-CoA biosynthesis; acetyl-CoA from acetate: step 1/2. Its function is as follows. Catalyzes the formation of acetyl phosphate from acetate and ATP. Can also catalyze the reverse reaction. In Lachnoclostridium phytofermentans (strain ATCC 700394 / DSM 18823 / ISDg) (Clostridium phytofermentans), this protein is Acetate kinase.